The primary structure comprises 799 residues: 1-phosphatidylinositol 4,5-bisphosphate phosphodiesterase delta-4 (799 aa).

Positions 16–124 (LLMQEGMPMR…WMRGLHLLVD (109 aa)) constitute a PH domain. The interval 26-53 (KVRSKSWKKLRYFRLQNDGMTVWHARQA) is substrate binding. 3 consecutive EF-hand domains span residues 134–169 (RLDQ…MNVE), 170–205 (MDQE…LTKR), and 206–237 (AEVQ…EQKE). Ca(2+)-binding residues include aspartate 147, asparagine 149, aspartate 151, lysine 153, glutamate 158, aspartate 183, serine 185, serine 187, threonine 189, and glutamate 194. The GBA signature appears at 213-243 (ESFSADGQKLTLLEFSDFLREEQKERDCTSE). A PI-PLC X-box domain is found at 290 to 435 (QDMTQPLNHY…LRRKILVKGK (146 aa)). Histidine 305 is an active-site residue. Positions 306, 335, and 337 each coordinate Ca(2+). Residue histidine 350 is part of the active site. A Ca(2+)-binding site is contributed by glutamate 384. Residues lysine 433 and lysine 435 each coordinate substrate. Serine 460 carries the phosphoserine modification. In terms of domain architecture, PI-PLC Y-box spans 530–646 (LSSLVIYLKS…GYVLKPDFLR (117 aa)). Residues serine 559 and arginine 586 each coordinate substrate. The 128-residue stretch at 646–773 (RDNQSSFHPE…QGYRHIHLLS (128 aa)) folds into the C2 domain. The Ca(2+) site is built by isoleucine 687, aspartate 689, asparagine 713, aspartate 742, tyrosine 743, and aspartate 744. Residues 768–771 (HIHL) carry the PDZ-binding motif.

Interacts with GRIP1. Interacts (via GBA motif) with guanine nucleotide-binding protein G(i) alpha subunit GNAI3 (inactive GDP-bound form); low-affinity interaction. Requires Ca(2+) as cofactor.

It localises to the membrane. Its subcellular location is the nucleus. It is found in the cytoplasm. The protein localises to the endoplasmic reticulum. It catalyses the reaction a 1,2-diacyl-sn-glycero-3-phospho-(1D-myo-inositol-4,5-bisphosphate) + H2O = 1D-myo-inositol 1,4,5-trisphosphate + a 1,2-diacyl-sn-glycerol + H(+). It carries out the reaction a 1,2-diacyl-sn-glycero-3-phospho-(1D-myo-inositol) + H2O = 1D-myo-inositol 1-phosphate + a 1,2-diacyl-sn-glycerol + H(+). In terms of biological role, hydrolyzes the phosphatidylinositol 4,5-bisphosphate (PIP2) to generate 2 second messenger molecules diacylglycerol (DAG) and inositol 1,4,5-trisphosphate (IP3). DAG mediates the activation of protein kinase C (PKC), while IP3 releases Ca(2+) from intracellular stores. Required for acrosome reaction in sperm during fertilization, probably by acting as an important enzyme for intracellular Ca(2+) mobilization in the zona pellucida-induced acrosome reaction. May play a role in cell growth. Modulates the liver regeneration in cooperation with nuclear PKC. Overexpression up-regulates the Erk signaling pathway and proliferation. In Macaca fascicularis (Crab-eating macaque), this protein is 1-phosphatidylinositol 4,5-bisphosphate phosphodiesterase delta-4 (PLCD4).